The following is a 171-amino-acid chain: UPF0725 protein At3g25080 (171 aa).

This sequence belongs to the UPF0725 (EMB2204) family.

The polypeptide is UPF0725 protein At3g25080 (Arabidopsis thaliana (Mouse-ear cress)).